The primary structure comprises 1059 residues: Protein OPAQUE10 (1059 aa).

7 consecutive repeat copies span residues 269–342 (SLLE…KESC), 343–416 (SLLE…KESC), 417–490 (SPLE…KESC), 491–564 (SPLE…KESC), 565–638 (FPLE…KESC), 639–712 (SPLE…KESC), and 713–786 (SPLE…KESC). The segment at 269–786 (SLLEPEDSVN…SRPIHDKESC (518 aa)) is 7 X approximate repeats. The disordered stretch occupies residues 511-534 (FNDAPNKESEGYGESGRGKHGEKS). Residues 515 to 534 (PNKESEGYGESGRGKHGEKS) show a composition bias toward basic and acidic residues. 3 disordered regions span residues 732–756 (QYSDGPNEGNEGYGESGHYKHEEKS), 856–875 (ETLADHPKKEEAGLQKDTGT), and 889–998 (SVCS…SGKG). The span at 858–869 (LADHPKKEEAGL) shows a compositional bias: basic and acidic residues. 2 stretches are compositionally biased toward polar residues: residues 907-924 (DFSSESHSRLTPTHNTGG) and 945-958 (ASDSTNPELNPEAS). Residues 984–994 (TRGRPEGDAPR) are compositionally biased toward basic and acidic residues. The helical transmembrane segment at 1003-1023 (VAGGITLVGAVFFMFHLSAAL) threads the bilayer.

In terms of assembly, homodimer. Interacts (via N-terminus) with FL1 (via C-terminus), HIP, 19 kDa alpha-zein (AC P06677), 22 kDa alpha-zein (AC O48966), 16 kDa gamma-zein (AC P08031) and 50 kDa gamma-zein (AC C0P381). As to expression, expressed in kernels.

The protein resides in the endoplasmic reticulum membrane. In terms of biological role, cereal endosperm protein required for the ring-shaped distribution of 22 kDa alpha- and 16 kDa gamma-zeins in protein bodies. This is Protein OPAQUE10 from Zea mays (Maize).